The sequence spans 159 residues: MEKIASFTIDHTKLKRGVYVSRQDKVAGNVITTFDLRLKEPNNEPALDGAASHTIEHIGATFLRNHKTWADRTIYFGPMGCQTGFYLILAGDWKAKDIVPLMQEMFAYVAQFTGTIPGESAVECGNFRFMDLIQAKEEAGKYFTEVLDNIAEKNLSYPS.

His-53, His-57, and Cys-124 together coordinate Fe cation.

It belongs to the LuxS family. In terms of assembly, homodimer. The cofactor is Fe cation.

The enzyme catalyses S-(5-deoxy-D-ribos-5-yl)-L-homocysteine = (S)-4,5-dihydroxypentane-2,3-dione + L-homocysteine. Involved in the synthesis of autoinducer 2 (AI-2) which is secreted by bacteria and is used to communicate both the cell density and the metabolic potential of the environment. The regulation of gene expression in response to changes in cell density is called quorum sensing. Catalyzes the transformation of S-ribosylhomocysteine (RHC) to homocysteine (HC) and 4,5-dihydroxy-2,3-pentadione (DPD). This chain is S-ribosylhomocysteine lyase, found in Desulfotalea psychrophila (strain LSv54 / DSM 12343).